Here is a 297-residue protein sequence, read N- to C-terminus: Large ribosomal subunit protein uL24m (297 aa).

Position 2 is an N-acetylserine (S2). One can recognise a KOW domain in the interval 63–96 (FIPGDRVVVMSGASKGNIAVIKSFDKRTNSFILD).

This sequence belongs to the universal ribosomal protein uL24 family. In terms of assembly, component of the mitochondrial large ribosomal subunit (mt-LSU). Mature yeast 74S mitochondrial ribosomes consist of a small (37S) and a large (54S) subunit. The 37S small subunit contains a 15S ribosomal RNA (15S mt-rRNA) and 34 different proteins. The 54S large subunit contains a 21S rRNA (21S mt-rRNA) and 46 different proteins. uL24m forms the wall of the exit tunnel.

Its subcellular location is the mitochondrion. Functionally, component of the mitochondrial ribosome (mitoribosome), a dedicated translation machinery responsible for the synthesis of mitochondrial genome-encoded proteins, including at least some of the essential transmembrane subunits of the mitochondrial respiratory chain. The mitoribosomes are attached to the mitochondrial inner membrane and translation products are cotranslationally integrated into the membrane. The protein is Large ribosomal subunit protein uL24m (MRPL40) of Saccharomyces cerevisiae (strain ATCC 204508 / S288c) (Baker's yeast).